Here is a 504-residue protein sequence, read N- to C-terminus: Maturase K (504 aa).

This sequence belongs to the intron maturase 2 family. MatK subfamily.

It is found in the plastid. It localises to the chloroplast. Usually encoded in the trnK tRNA gene intron. Probably assists in splicing its own and other chloroplast group II introns. This is Maturase K from Fagus hayatae (Formosan elm).